Consider the following 309-residue polypeptide: Formimidoylglutamase (309 aa).

Residues His128, Asp153, His155, Asp157, Cys240, and Asp242 each contribute to the Mn(2+) site.

Belongs to the arginase family. It depends on Mn(2+) as a cofactor.

The enzyme catalyses N-formimidoyl-L-glutamate + H2O = formamide + L-glutamate. Its pathway is amino-acid degradation; L-histidine degradation into L-glutamate; L-glutamate from N-formimidoyl-L-glutamate (hydrolase route): step 1/1. In terms of biological role, catalyzes the conversion of N-formimidoyl-L-glutamate to L-glutamate and formamide. The polypeptide is Formimidoylglutamase (Staphylococcus carnosus (strain TM300)).